The primary structure comprises 430 residues: Histidinol dehydrogenase (430 aa).

3 residues coordinate substrate: S237, Q259, and H262. Q259 and H262 together coordinate Zn(2+). Active-site proton acceptor residues include E327 and H328. H328, D361, E415, and H420 together coordinate substrate. Zn(2+) is bound at residue D361. H420 contributes to the Zn(2+) binding site.

The protein belongs to the histidinol dehydrogenase family. Zn(2+) serves as cofactor.

The enzyme catalyses L-histidinol + 2 NAD(+) + H2O = L-histidine + 2 NADH + 3 H(+). Its pathway is amino-acid biosynthesis; L-histidine biosynthesis; L-histidine from 5-phospho-alpha-D-ribose 1-diphosphate: step 9/9. Functionally, catalyzes the sequential NAD-dependent oxidations of L-histidinol to L-histidinaldehyde and then to L-histidine. In Sulfurimonas denitrificans (strain ATCC 33889 / DSM 1251) (Thiomicrospira denitrificans (strain ATCC 33889 / DSM 1251)), this protein is Histidinol dehydrogenase.